The primary structure comprises 123 residues: Small ribosomal subunit protein bS16 (123 aa).

Residues 86–123 (PVRAEQTKQPQPKAKAQQRAKDQAERDAAAAAEAAAGE) are disordered. Positions 93-102 (KQPQPKAKAQ) are enriched in low complexity. Over residues 104-113 (RAKDQAERDA) the composition is skewed to basic and acidic residues. Over residues 114-123 (AAAAEAAAGE) the composition is skewed to low complexity.

This sequence belongs to the bacterial ribosomal protein bS16 family.

The sequence is that of Small ribosomal subunit protein bS16 from Paramagnetospirillum magneticum (strain ATCC 700264 / AMB-1) (Magnetospirillum magneticum).